A 285-amino-acid chain; its full sequence is Protoheme IX farnesyltransferase (285 aa).

The next 9 helical transmembrane spans lie at 13–33, 40–60, 89–109, 110–130, 137–157, 165–185, 194–214, 230–252, and 265–285; these read LGKLGVVSLLDLAAVAGAFLA, LLPIIPMFIGGTLASMGAMII, EAIIVGSLLAILGTALGFIDN, ILTAFFIALGVVIYIFVYTIL, LNIVIGGFAGSAAAWAGYTSL, GFLLGFLIFMWTPGHFWSLAL, AHYPMLPAVVGITTSARAIAI, INLIALIAFSILSLFLMFLSYRL, and FIFSNIYLMLILLIMIIVKLI.

This sequence belongs to the UbiA prenyltransferase family. Protoheme IX farnesyltransferase subfamily.

It localises to the cell membrane. The catalysed reaction is heme b + (2E,6E)-farnesyl diphosphate + H2O = Fe(II)-heme o + diphosphate. The protein operates within porphyrin-containing compound metabolism; heme O biosynthesis; heme O from protoheme: step 1/1. Converts heme B (protoheme IX) to heme O by substitution of the vinyl group on carbon 2 of heme B porphyrin ring with a hydroxyethyl farnesyl side group. The protein is Protoheme IX farnesyltransferase of Saccharolobus islandicus (strain Y.N.15.51 / Yellowstone #2) (Sulfolobus islandicus).